The sequence spans 201 residues: Small ribosomal subunit protein uS4 (201 aa).

In terms of domain architecture, S4 RNA-binding spans 91 to 151 (SRLDNVVYRA…EKSQKMIWFE (61 aa)).

Belongs to the universal ribosomal protein uS4 family. Part of the 30S ribosomal subunit. Contacts protein S5. The interaction surface between S4 and S5 is involved in control of translational fidelity.

Functionally, one of the primary rRNA binding proteins, it binds directly to 16S rRNA where it nucleates assembly of the body of the 30S subunit. With S5 and S12 plays an important role in translational accuracy. The polypeptide is Small ribosomal subunit protein uS4 (Corynebacterium diphtheriae (strain ATCC 700971 / NCTC 13129 / Biotype gravis)).